The chain runs to 88 residues: Large ribosomal subunit protein bL27 (88 aa).

The segment at 1-21 (MAHKKGASSSRNGRDSNAQRL) is disordered. Polar residues predominate over residues 7–19 (ASSSRNGRDSNAQ).

This sequence belongs to the bacterial ribosomal protein bL27 family.

The sequence is that of Large ribosomal subunit protein bL27 from Frankia casuarinae (strain DSM 45818 / CECT 9043 / HFP020203 / CcI3).